Reading from the N-terminus, the 199-residue chain is VAMP-like protein YKT61 (199 aa).

Positions 7–133 (LVLKCAPEAS…LTEALNKFQD (127 aa)) constitute a Longin domain. Residues 139-199 (KLLKIQRELD…KKTNSCCTIL (61 aa)) form the v-SNARE coiled-coil homology domain. C195 carries the S-palmitoyl cysteine lipid modification. A Cysteine methyl ester modification is found at C196. C196 carries S-geranylgeranyl cysteine lipidation. A propeptide spans 197–199 (TIL) (removed in mature form).

Belongs to the synaptobrevin family. As to quaternary structure, interacts with SYP41. Core constituent of the SNARE complex required for membrane fusion at the trans-Golgi network. In terms of tissue distribution, expressed ubiquitously in roots, stems, flowers and leaves.

The protein localises to the cell membrane. Functionally, may be involved in the secretory pathway. Essential for membrane fusion mediated by either SYP41 or SYP61; triggers the fusion of phospholipid vesicles containing SYP41 or SYP61 and VTI12. The chain is VAMP-like protein YKT61 from Arabidopsis thaliana (Mouse-ear cress).